Here is a 103-residue protein sequence, read N- to C-terminus: Cell division suppressor protein YneA (103 aa).

The region spanning 36–87 (VKIKVQDGDTLWSLADHVAEKKHINKEDFIEWVTENNHLQTADIKPGDELIL) is the LysM domain.

Belongs to the YneA family.

The protein resides in the cytoplasm. Functionally, inhibits cell division during the SOS response. Affects a later stage of the cell division protein assembly, after the assembly of the Z ring, by probably suppressing recruitment of FtsL and/or DivIC to the division machinery. This is Cell division suppressor protein YneA from Bacillus velezensis (strain DSM 23117 / BGSC 10A6 / LMG 26770 / FZB42) (Bacillus amyloliquefaciens subsp. plantarum).